A 503-amino-acid polypeptide reads, in one-letter code: Cytochrome P450 3A43 (503 aa).

Residue C442 participates in heme binding.

This sequence belongs to the cytochrome P450 family. The cofactor is heme. Highest expression level in prostate. Also expressed in liver, kidney, pancreas, fetal liver and fetal skeletal muscle.

It is found in the endoplasmic reticulum membrane. The protein resides in the microsome membrane. The enzyme catalyses an organic molecule + reduced [NADPH--hemoprotein reductase] + O2 = an alcohol + oxidized [NADPH--hemoprotein reductase] + H2O + H(+). Its function is as follows. Exhibits low testosterone 6-beta-hydroxylase activity. The protein is Cytochrome P450 3A43 (CYP3A43) of Homo sapiens (Human).